The primary structure comprises 126 residues: L-alanine exporter AlaE (126 aa).

Residues 23–43 traverse the membrane as a helical segment; it reads FALVVYCFFTGMAIEILLSGM.

It belongs to the AlaE exporter family.

The protein localises to the cell inner membrane. Exports L-alanine. The sequence is that of L-alanine exporter AlaE from Sodalis glossinidius (strain morsitans).